The primary structure comprises 277 residues: S-formylglutathione hydrolase FrmB (277 aa).

Catalysis depends on charge relay system residues Ser145, Asp221, and His254.

The protein belongs to the esterase D family.

The enzyme catalyses S-formylglutathione + H2O = formate + glutathione + H(+). Functionally, serine hydrolase involved in the detoxification of formaldehyde. Hydrolyzes S-formylglutathione to glutathione and formate. This Escherichia coli O157:H7 protein is S-formylglutathione hydrolase FrmB (frmB).